Here is a 249-residue protein sequence, read N- to C-terminus: Putative [LysW]-aminoadipate/[LysW]-glutamate kinase (249 aa).

2 residues coordinate substrate: Arg63 and Asn166.

This sequence belongs to the acetylglutamate kinase family. LysZ subfamily.

It is found in the cytoplasm. The catalysed reaction is [amino-group carrier protein]-C-terminal-N-(1,4-dicarboxybutan-1-yl)-L-glutamine + ATP = [amino-group carrier protein]-C-terminal-N-(1-carboxy-5-phosphooxy-5-oxopentan-1-yl)-L-glutamine + ADP. The enzyme catalyses [amino-group carrier protein]-C-terminal-gamma-(L-glutamyl)-L-glutamate + ATP = [amino-group carrier protein]-C-terminal-gamma-(5-phospho-L-glutamyl)-L-glutamate + ADP. It functions in the pathway amino-acid biosynthesis; L-lysine biosynthesis via AAA pathway; L-lysine from L-alpha-aminoadipate (Thermus route): step 2/5. Its pathway is amino-acid biosynthesis; L-arginine biosynthesis. In terms of biological role, involved in both the arginine and lysine biosynthetic pathways. Phosphorylates the LysW-bound precursors glutamate (for arginine biosynthesis), respectively alpha-aminoadipate (for lysine biosynthesis). This Pyrococcus furiosus (strain ATCC 43587 / DSM 3638 / JCM 8422 / Vc1) protein is Putative [LysW]-aminoadipate/[LysW]-glutamate kinase.